The following is a 201-amino-acid chain: Desiccation-related protein PCC3-06 (201 aa).

The segment covering 41 to 54 (TVASQSQGRQQVSE) has biased composition (polar residues). 2 disordered regions span residues 41 to 155 (TVAS…QNVK) and 177 to 201 (MGKS…TNYF). Basic and acidic residues-rich tracts occupy residues 57–76 (EDAK…KTSE), 108–144 (GELK…ERVA), and 177–193 (MGKS…ETKK).

Belongs to the LEA type 1 family.

This chain is Desiccation-related protein PCC3-06, found in Craterostigma plantagineum (Blue gem).